The chain runs to 133 residues: Urease subunit beta (133 aa).

The interval 106-133 (VFRPNDSNQNAAVKNDAGEDNANKKGGK) is disordered.

This sequence belongs to the urease beta subunit family. In terms of assembly, heterotrimer of UreA (gamma), UreB (beta) and UreC (alpha) subunits. Three heterotrimers associate to form the active enzyme.

The protein resides in the cytoplasm. It catalyses the reaction urea + 2 H2O + H(+) = hydrogencarbonate + 2 NH4(+). Its pathway is nitrogen metabolism; urea degradation; CO(2) and NH(3) from urea (urease route): step 1/1. The polypeptide is Urease subunit beta (Staphylococcus epidermidis (strain ATCC 12228 / FDA PCI 1200)).